Reading from the N-terminus, the 869-residue chain is DNA mismatch repair protein MutS (869 aa).

ATP is bound at residue 619 to 626; that stretch reads GPNMAGKS.

The protein belongs to the DNA mismatch repair MutS family.

Its function is as follows. This protein is involved in the repair of mismatches in DNA. It is possible that it carries out the mismatch recognition step. This protein has a weak ATPase activity. This Caldanaerobacter subterraneus subsp. tengcongensis (strain DSM 15242 / JCM 11007 / NBRC 100824 / MB4) (Thermoanaerobacter tengcongensis) protein is DNA mismatch repair protein MutS.